The chain runs to 262 residues: Putative hydro-lyase Mflv_5194 (262 aa).

Belongs to the D-glutamate cyclase family.

This Mycolicibacterium gilvum (strain PYR-GCK) (Mycobacterium gilvum (strain PYR-GCK)) protein is Putative hydro-lyase Mflv_5194.